A 29-amino-acid chain; its full sequence is NADP phosphatase 1 (29 aa).

In terms of assembly, homodimer.

It is found in the cytoplasm. This is NADP phosphatase 1 from Arthrobacter sp. (strain KM).